Reading from the N-terminus, the 635-residue chain is Protein OPG056 (635 aa).

It belongs to the orthopoxvirus OPG056 family. Interacts with protein OPG164/A36. Interacts with protein OPG064/E2.

The protein localises to the virion membrane. Its subcellular location is the host endosome. Its function is as follows. Plays a role in intracellular enveloped virus (IEV) transport to the cell surface through microtubule transport. Together with protein OPG064/E2, forms a complex that interacts with host KLC2 (kinesin light chain isoform 2) to engage the kinesin-1 complex and thereby promote IEV trafficking. The sequence is that of Protein OPG056 (OPG056) from Vaccinia virus (strain Western Reserve) (VACV).